Consider the following 440-residue polypeptide: Probable D-serine dehydratase (440 aa).

The residue at position 111 (Lys-111) is an N6-(pyridoxal phosphate)lysine.

This sequence belongs to the serine/threonine dehydratase family. DsdA subfamily. The cofactor is pyridoxal 5'-phosphate.

It catalyses the reaction D-serine = pyruvate + NH4(+). The chain is Probable D-serine dehydratase from Rhizobium leguminosarum bv. trifolii (strain WSM2304).